The primary structure comprises 125 residues: uncharacterized protein (125 aa).

Positions 5 to 33 form a coiled coil; that stretch reads NLTVEQLAAELTKLQMENSHLKRKLRRSV. Disordered stretches follow at residues 22–50 and 96–125; these read NSHL…TEPE and FRLH…GQQQ. 2 stretches are compositionally biased toward basic and acidic residues: residues 39 to 50 and 96 to 112; these read EPPKPRELTEPE and FRLH…EKKL. Over residues 113–125 the composition is skewed to basic residues; it reads SKEKRRTARGQQQ.

The protein belongs to the herpesviridae BLRF2 family.

This is an uncharacterized protein from Connochaetes taurinus (Blue wildebeest).